Consider the following 820-residue polypeptide: DNA mismatch repair protein MutS (820 aa).

An ATP-binding site is contributed by 615–622; the sequence is GPNMAGKS.

This sequence belongs to the DNA mismatch repair MutS family.

In terms of biological role, this protein is involved in the repair of mismatches in DNA. It is possible that it carries out the mismatch recognition step. This protein has a weak ATPase activity. The protein is DNA mismatch repair protein MutS of Anaplasma phagocytophilum (strain HZ).